A 462-amino-acid polypeptide reads, in one-letter code: Fez family zinc finger protein 1 (462 aa).

The short motif at 34–49 (PLAFSIERIMSRTPEP) is the Engrailed homology 1 repressor element. C2H2-type zinc fingers lie at residues 260 to 282 (FTCE…MPVH), 288 to 310 (FVCK…KIIH), 316 to 338 (HKCN…TRIH), 344 to 366 (FVCE…KLTH), 372 to 394 (FKCN…MHTH), and 400 to 423 (FTCP…RKLH). Residues 441 to 462 (LLLPNREPSPTIQSPQLQKSGY) form a disordered region. Polar residues predominate over residues 448 to 462 (PSPTIQSPQLQKSGY).

Belongs to the krueppel C2H2-type zinc-finger protein family.

Its subcellular location is the nucleus. In terms of biological role, transcription repressor. Involved in the development of the forebrain region. This Xenopus tropicalis (Western clawed frog) protein is Fez family zinc finger protein 1 (fezf1).